A 494-amino-acid chain; its full sequence is 3-octaprenyl-4-hydroxybenzoate carboxy-lyase (494 aa).

Asn-172 contacts Mn(2+). Prenylated FMN is bound by residues 175–177 (IYR), 189–191 (RWL), and 194–195 (RG). Glu-238 serves as a coordination point for Mn(2+). The Proton donor role is filled by Asp-287.

It belongs to the UbiD family. In terms of assembly, homohexamer. Prenylated FMN serves as cofactor. Mn(2+) is required as a cofactor.

It is found in the cell membrane. The enzyme catalyses a 4-hydroxy-3-(all-trans-polyprenyl)benzoate + H(+) = a 2-(all-trans-polyprenyl)phenol + CO2. It participates in cofactor biosynthesis; ubiquinone biosynthesis. In terms of biological role, catalyzes the decarboxylation of 3-octaprenyl-4-hydroxy benzoate to 2-octaprenylphenol, an intermediate step in ubiquinone biosynthesis. This chain is 3-octaprenyl-4-hydroxybenzoate carboxy-lyase, found in Escherichia coli O9:H4 (strain HS).